Here is a 178-residue protein sequence, read N- to C-terminus: Probable chorismate pyruvate-lyase (178 aa).

3 residues coordinate substrate: Arg72, Leu110, and Glu169.

It belongs to the UbiC family.

Its subcellular location is the cytoplasm. It carries out the reaction chorismate = 4-hydroxybenzoate + pyruvate. The protein operates within cofactor biosynthesis; ubiquinone biosynthesis. Removes the pyruvyl group from chorismate, with concomitant aromatization of the ring, to provide 4-hydroxybenzoate (4HB) for the ubiquinone pathway. In Nitrosomonas eutropha (strain DSM 101675 / C91 / Nm57), this protein is Probable chorismate pyruvate-lyase.